Consider the following 145-residue polypeptide: 3-dehydroquinate dehydratase (145 aa).

Residue tyrosine 24 is the Proton acceptor of the active site. 3 residues coordinate substrate: asparagine 75, histidine 81, and aspartate 88. The active-site Proton donor is the histidine 102. Substrate is bound by residues leucine 103 to serine 104 and arginine 113.

It belongs to the type-II 3-dehydroquinase family. In terms of assembly, homododecamer.

The catalysed reaction is 3-dehydroquinate = 3-dehydroshikimate + H2O. It functions in the pathway metabolic intermediate biosynthesis; chorismate biosynthesis; chorismate from D-erythrose 4-phosphate and phosphoenolpyruvate: step 3/7. Its function is as follows. Catalyzes a trans-dehydration via an enolate intermediate. This chain is 3-dehydroquinate dehydratase, found in Chelativorans sp. (strain BNC1).